The following is a 141-amino-acid chain: Nucleoside diphosphate kinase (141 aa).

Residues Lys-11, Phe-59, Arg-87, Thr-93, Arg-104, and Asn-114 each contribute to the ATP site. The active-site Pros-phosphohistidine intermediate is His-117.

The protein belongs to the NDK family. In terms of assembly, homotetramer. The cofactor is Mg(2+).

The protein resides in the cytoplasm. It carries out the reaction a 2'-deoxyribonucleoside 5'-diphosphate + ATP = a 2'-deoxyribonucleoside 5'-triphosphate + ADP. The enzyme catalyses a ribonucleoside 5'-diphosphate + ATP = a ribonucleoside 5'-triphosphate + ADP. Major role in the synthesis of nucleoside triphosphates other than ATP. The ATP gamma phosphate is transferred to the NDP beta phosphate via a ping-pong mechanism, using a phosphorylated active-site intermediate. The sequence is that of Nucleoside diphosphate kinase from Histophilus somni (strain 2336) (Haemophilus somnus).